We begin with the raw amino-acid sequence, 419 residues long: Phosphatidylcholine:ceramide cholinephosphotransferase 1 (419 aa).

Residues tryptophan 13–glutamate 76 form the SAM domain. Serine 14 carries the post-translational modification Phosphoserine. Transmembrane regions (helical) follow at residues leucine 142–valine 162, phenylalanine 190–leucine 210, phenylalanine 221–leucine 241, methionine 282–isoleucine 302, and leucine 310–leucine 330. Histidine 291 is a catalytic residue. Residues alanine 331 to threonine 419 lie on the Cytoplasmic side of the membrane. Residues histidine 334 and aspartate 338 contribute to the active site.

This sequence belongs to the sphingomyelin synthase family.

Its subcellular location is the golgi apparatus membrane. The enzyme catalyses an N-acylsphing-4-enine + a 1,2-diacyl-sn-glycero-3-phosphocholine = a sphingomyelin + a 1,2-diacyl-sn-glycerol. The catalysed reaction is 1-(9Z-octadecenoyl)-2-acyl-sn-3-glycerol + a sphingomyelin = a 1-(9Z-octadecenoyl)-2-acyl-sn-glycero-3-phosphocholine + an N-acylsphing-4-enine. It catalyses the reaction N-hexadecanoylsphinganine + a 1,2-diacyl-sn-glycero-3-phosphocholine = N-hexadecanoyl-sphinganine-1-phosphocholine + a 1,2-diacyl-sn-glycerol. It carries out the reaction N-hexadecanoyl-(4R)-hydroxysphinganine + a 1,2-diacyl-sn-glycero-3-phosphocholine = N-hexadecanoyl-(4R)-hydroxysphinganine-phosphocholine + a 1,2-diacyl-sn-glycerol. The enzyme catalyses an N-acylsphing-4-enine + a 1,2-diacyl-sn-glycero-3-phosphoethanolamine = an N-acylsphing-4-enine 1-phosphoethanolamine + a 1,2-diacyl-sn-glycerol. The protein operates within sphingolipid metabolism. Major sphingomyelin synthase at the Golgi apparatus. Catalyzes the reversible transfer of phosphocholine moiety in sphingomyelin biosynthesis: in the forward reaction transfers phosphocholine head group of phosphatidylcholine (PC) on to ceramide (CER) to form ceramide phosphocholine (sphingomyelin, SM) and diacylglycerol (DAG) as by-product, and in the reverse reaction transfers phosphocholine from SM to DAG to form PC and CER. The direction of the reaction depends on the levels of CER and DAG in Golgi membranes. Converts the newly synthesized CER, that is transported from the endoplasmic reticulum to the trans-Golgi by the Cer transport protein (CERT), to SM. Can form a heteromeric complex with glucosylceramide synthase (GCS) increasing SMS activity and reducing glucosylceramide synthesis, a critical mechanism that controls the metabolic fate of CER in the Golgi. Does not use free phosphorylcholine or CDP-choline as donor. Can also transfer phosphoethanolamine head group of phosphatidylethanolamine (PE) on to CER to form ceramide phosphoethanolamine (CPE). Regulates receptor-mediated signal transduction via mitogenic DAG and proapoptotic CER, as well as via SM, a structural component of membrane rafts that serve as platforms for signal transduction and protein sorting. Plays a role in secretory transport via regulation of DAG pool at the Golgi apparatus and its downstream effects on PRKD1. The polypeptide is Phosphatidylcholine:ceramide cholinephosphotransferase 1 (Sgms1) (Rattus norvegicus (Rat)).